We begin with the raw amino-acid sequence, 115 residues long: Nitrogenase-stabilizing/protective protein NifW (115 aa).

Belongs to the NifW family. As to quaternary structure, homotrimer; associates with NifD.

May protect the nitrogenase Fe-Mo protein from oxidative damage. The polypeptide is Nitrogenase-stabilizing/protective protein NifW (Methylobacterium sp. (strain 4-46)).